A 96-amino-acid chain; its full sequence is Co-chaperonin GroES (96 aa).

It belongs to the GroES chaperonin family. Heptamer of 7 subunits arranged in a ring. Interacts with the chaperonin GroEL.

Its subcellular location is the cytoplasm. Together with the chaperonin GroEL, plays an essential role in assisting protein folding. The GroEL-GroES system forms a nano-cage that allows encapsulation of the non-native substrate proteins and provides a physical environment optimized to promote and accelerate protein folding. GroES binds to the apical surface of the GroEL ring, thereby capping the opening of the GroEL channel. This is Co-chaperonin GroES from Thiobacillus denitrificans (strain ATCC 25259 / T1).